The following is a 396-amino-acid chain: ATP phosphoribosyltransferase regulatory subunit (396 aa).

It belongs to the class-II aminoacyl-tRNA synthetase family. HisZ subfamily. Heteromultimer composed of HisG and HisZ subunits.

It is found in the cytoplasm. It functions in the pathway amino-acid biosynthesis; L-histidine biosynthesis; L-histidine from 5-phospho-alpha-D-ribose 1-diphosphate: step 1/9. Required for the first step of histidine biosynthesis. May allow the feedback regulation of ATP phosphoribosyltransferase activity by histidine. In Alkaliphilus metalliredigens (strain QYMF), this protein is ATP phosphoribosyltransferase regulatory subunit.